The following is a 187-amino-acid chain: Large ribosomal subunit protein uL5 (187 aa).

It belongs to the universal ribosomal protein uL5 family. Part of the 50S ribosomal subunit; part of the 5S rRNA/L5/L18/L25 subcomplex. Contacts the 5S rRNA and the P site tRNA. Forms a bridge to the 30S subunit in the 70S ribosome.

Its function is as follows. This is one of the proteins that bind and probably mediate the attachment of the 5S RNA into the large ribosomal subunit, where it forms part of the central protuberance. In the 70S ribosome it contacts protein S13 of the 30S subunit (bridge B1b), connecting the 2 subunits; this bridge is implicated in subunit movement. Contacts the P site tRNA; the 5S rRNA and some of its associated proteins might help stabilize positioning of ribosome-bound tRNAs. The polypeptide is Large ribosomal subunit protein uL5 (Nocardia farcinica (strain IFM 10152)).